A 114-amino-acid polypeptide reads, in one-letter code: Circadian clock oscillator protein KaiB (114 aa).

The protein belongs to the KaiB family. As to quaternary structure, may undergo a major conformational rearrangment; in the free state forms homooligomers. When bound to KaiC switches to a monomeric thioredoxin-fold (KaiB(fs)). The active oscillator complex is probably KaiC(6):KaiB(6).

Component of the KaiBC clock protein complex, which constitutes the main circadian regulator in cyanobacteria; it may modify the ATPase activity of KaiC. Its function is as follows. May be a metamorphic protein which reversibly switches between an inactive tetrameric fold and a rare, thioredoxin-like monomeric fold (KaiB(fs)). KaiB(fs) binds phospho-KaiC, and perhaps clock output effectors. This Prochlorococcus marinus (strain MIT 9211) protein is Circadian clock oscillator protein KaiB.